The primary structure comprises 271 residues: 4-diphosphocytidyl-2-C-methyl-D-erythritol kinase (271 aa).

The active site involves Lys17. 97–107 (PVGSGLGGGSS) is a binding site for ATP. Asp137 is an active-site residue.

Belongs to the GHMP kinase family. IspE subfamily.

It catalyses the reaction 4-CDP-2-C-methyl-D-erythritol + ATP = 4-CDP-2-C-methyl-D-erythritol 2-phosphate + ADP + H(+). It functions in the pathway isoprenoid biosynthesis; isopentenyl diphosphate biosynthesis via DXP pathway; isopentenyl diphosphate from 1-deoxy-D-xylulose 5-phosphate: step 3/6. Functionally, catalyzes the phosphorylation of the position 2 hydroxy group of 4-diphosphocytidyl-2C-methyl-D-erythritol. The chain is 4-diphosphocytidyl-2-C-methyl-D-erythritol kinase from Thermotoga maritima (strain ATCC 43589 / DSM 3109 / JCM 10099 / NBRC 100826 / MSB8).